Consider the following 233-residue polypeptide: 2,3,4,5-tetrahydropyridine-2,6-dicarboxylate N-acetyltransferase (233 aa).

Belongs to the transferase hexapeptide repeat family. DapH subfamily.

It carries out the reaction (S)-2,3,4,5-tetrahydrodipicolinate + acetyl-CoA + H2O = L-2-acetamido-6-oxoheptanedioate + CoA. The protein operates within amino-acid biosynthesis; L-lysine biosynthesis via DAP pathway; LL-2,6-diaminopimelate from (S)-tetrahydrodipicolinate (acetylase route): step 1/3. Its function is as follows. Catalyzes the transfer of an acetyl group from acetyl-CoA to tetrahydrodipicolinate. The sequence is that of 2,3,4,5-tetrahydropyridine-2,6-dicarboxylate N-acetyltransferase from Leuconostoc mesenteroides subsp. mesenteroides (strain ATCC 8293 / DSM 20343 / BCRC 11652 / CCM 1803 / JCM 6124 / NCDO 523 / NBRC 100496 / NCIMB 8023 / NCTC 12954 / NRRL B-1118 / 37Y).